The primary structure comprises 702 residues: Palmitoyltransferase AKR1 (702 aa).

A compositionally biased stretch (polar residues) spans 1–40 (MSTDAELQTISGLSVASKSAPSTQTEGVTASGKVESTTNA). Residues 1 to 51 (MSTDAELQTISGLSVASKSAPSTQTEGVTASGKVESTTNAEEATSDVEEEE) are disordered. Topologically, residues 1–299 (MSTDAELQTI…TTNLLCFFTP (299 aa)) are cytoplasmic. ANK repeat units lie at residues 49–80 (EEEN…VLDT), 83–112 (DGVT…VVDA), 117–147 (LNGT…PLRS), 150–179 (QGYN…PVDC), 183–212 (NGRT…DVKI), and 216–245 (QGFL…DMYA). The next 2 membrane-spanning stretches (helical) occupy residues 300 to 320 (FILI…FGII) and 321 to 341 (LTVA…LPSL). Topologically, residues 342 to 354 (YNGHAALLKSPFQ) are cytoplasmic. Residues 355–375 (AGIFTGSAFWVTVKYLTSVLP) form a helical membrane-spanning segment. The Lumenal segment spans residues 376–379 (ATFA). The chain crosses the membrane as a helical span at residues 380–400 (SHPILNFFFASIFGLAMYCFF). The Cytoplasmic segment spans residues 401-479 (RCMSMDPGYI…WNAIGVRNHR (79 aa)). The DHHC domain maps to 436 to 486 (HFCFVTYVRKPLRSKFCRQSKRVVARFDHFCPWVWNAIGVRNHRMFVLYVL). The S-palmitoyl cysteine intermediate role is filled by Cys-466. Residues 480–500 (MFVLYVLFLQIGIPLWLALNS) traverse the membrane as a helical segment. Over 501–518 (AYFGELLEIKRWDPLEFY) the chain is Lumenal. A helical transmembrane segment spans residues 519–539 (LVIWISLQLIWITFLSFVQIF). At 540–702 (QICRSLTTSE…GEALLAESQV (163 aa)) the chain is on the cytoplasmic side. Positions 679–702 (PNQQQTNNRSTREDGEALLAESQV) are disordered.

The protein belongs to the DHHC palmitoyltransferase family. AKR/ZDHHC17 subfamily.

It localises to the early endosome membrane. It is found in the golgi apparatus membrane. The enzyme catalyses L-cysteinyl-[protein] + hexadecanoyl-CoA = S-hexadecanoyl-L-cysteinyl-[protein] + CoA. In terms of biological role, palmitoyltransferase specific for casein kinase 1. The polypeptide is Palmitoyltransferase AKR1 (AKR1) (Yarrowia lipolytica (strain CLIB 122 / E 150) (Yeast)).